An 80-amino-acid polypeptide reads, in one-letter code: MARKKASLDFEQSLADLQALVERLENGELSLEESLAAFEQGIALTRDCQGALAQAEQKVQILLERDGELAAQPFDAEPEA.

The protein belongs to the XseB family. In terms of assembly, heterooligomer composed of large and small subunits.

It localises to the cytoplasm. It catalyses the reaction Exonucleolytic cleavage in either 5'- to 3'- or 3'- to 5'-direction to yield nucleoside 5'-phosphates.. Bidirectionally degrades single-stranded DNA into large acid-insoluble oligonucleotides, which are then degraded further into small acid-soluble oligonucleotides. This Pseudomonas putida (strain ATCC 700007 / DSM 6899 / JCM 31910 / BCRC 17059 / LMG 24140 / F1) protein is Exodeoxyribonuclease 7 small subunit.